A 372-amino-acid chain; its full sequence is MENGEAKQSVPLLTPYKMGRFNLSHRVVLAPLTRQRSYGNVPQPHAAIYYSQRTTPGGFLITEATGVSDTAQGYQDTPGIWTKEHVEAWKPIVDAVHAKGGIFFCQIWHVGRVSNSGFQPNGKAPISCSDKPLMPQIRSNGIDEALFTPPRRLGIEEIPGIVNDFRLAARNAMEAGFDGVEIHGANGYLIDQFMKDTVNDRTDEYGGSLQNRCKFPLEIVDAVAKEIGPDRVGIRLSPFADYMESGDTNPGALGLYMAESLNKYGILYCHVIEARMKTMGEVHACPHTLMPMRKAFKGTFISAGGFTREDGNEAVSKGRTDLVAYGRWFLANPDLPKRFQVDAPLNKYDRPTFYTSDPVVGYTDYPFLESTA.

Met1 carries the N-acetylmethionine modification. FMN is bound by residues 31–33 (PLT), Ala64, and Gln106. His183 contributes to the substrate binding site. Catalysis depends on Tyr188, which acts as the Proton donor. Arg235 contributes to the FMN binding site. Substrate is bound at residue Arg275. FMN contacts are provided by residues 303-305 (AGG) and 326-327 (GR).

It belongs to the NADH:flavin oxidoreductase/NADH oxidase family. FMN serves as cofactor. As to expression, mostly expressed in roots, also present in leaves, shoots and flowers. More abundant in cotyledons. In more details, expressed in peduncles, sepals, petals, around the abscission zone of siliques, maturing siliques and developing seeds.

Its subcellular location is the cytoplasm. It catalyses the reaction (1S,2S)-OPC-8 + NADP(+) = (9S,13S,15Z)-12-oxophyto-10,15-dienoate + NADPH + H(+). The protein operates within lipid metabolism; oxylipin biosynthesis. Specifically cleaves olefinic bonds in alpha,beta-unsaturated carbonyls and may be involved in detoxification or modification of these reactive compounds. May be involved in the biosynthesis or metabolism of oxylipin signaling molecules. In vitro, reduces 9R,13R-12-oxophytodienoic acid (9R,13R-OPDA) to 9R,13R-OPC-8:0, but only poorly 9S,13S-OPDA, the natural precursor of jasmonic acid. Can detoxify the explosive 2,4,6-trinitrotoluene (TNT) in vitro and in vivo by catalyzing its nitroreduction to form hydroxylamino-dinitrotoluene (HADNT). The sequence is that of 12-oxophytodienoate reductase 1 from Arabidopsis thaliana (Mouse-ear cress).